A 530-amino-acid chain; its full sequence is UPF0422 protein lpg2959 (530 aa).

An N-terminal signal peptide occupies residues 1-19 (MKFKKIILALACLSSPLYA). Positions 20-66 (DQDQQLKSEIQRLQHQAEDLQAQLNRLQKQLANHKSSQQKHEQQAAA) form a coiled coil. The disordered stretch occupies residues 50 to 81 (LANHKSSQQKHEQQAAAKPAEPQSKPTVKSGA). Positions 63 to 75 (QAAAKPAEPQSKP) are enriched in low complexity.

This sequence belongs to the UPF0422 family.

The polypeptide is UPF0422 protein lpg2959 (Legionella pneumophila subsp. pneumophila (strain Philadelphia 1 / ATCC 33152 / DSM 7513)).